The chain runs to 534 residues: Coiled-coil domain-containing protein 183 (534 aa).

3 coiled-coil regions span residues 10–54, 136–209, and 321–406; these read EAQI…NLRR, DATK…DMTV, and RFLA…LLVI.

The chain is Coiled-coil domain-containing protein 183 (Ccdc183) from Mus musculus (Mouse).